The chain runs to 126 residues: SH2 domain-containing protein 1A (126 aa).

An SH2 domain is found at 6 to 102; that stretch reads VYHGKISREM…GIVTPLQYPV (97 aa). Positions 67 to 92 are interaction with FYN SH3 domain; that stretch reads ETAPGVHKRFFRKVKNLISAFQKPDQ. Residue lysine 89 is modified to N6-acetyllysine. The segment at 100–126 is disordered; sequence YPVEKSSARSPQAPTGRRDSDICLKAP. Basic and acidic residues predominate over residues 115–126; the sequence is GRRDSDICLKAP. Residue serine 119 is modified to Phosphoserine.

As to quaternary structure, interacts with CD84, CD244, LY9, SLAMF1 and FYN. Interacts with NTRK1, NTRK2 and NTRK3.

It is found in the cytoplasm. Its function is as follows. Cytoplasmic adapter regulating receptors of the signaling lymphocytic activation molecule (SLAM) family such as SLAMF1, CD244, LY9, CD84, SLAMF6 and SLAMF7. In SLAM signaling seems to cooperate with SH2D1B/EAT-2. Initially it has been proposed that association with SLAMF1 prevents SLAMF1 binding to inhibitory effectors including INPP5D/SHIP1 and PTPN11/SHP-2. However, by simultaneous interactions, recruits FYN which subsequently phosphorylates and activates SLAMF1. Positively regulates CD244/2B4- and CD84-mediated natural killer (NK) cell functions. Can also promote CD48-, SLAMF6 -, LY9-, and SLAMF7-mediated NK cell activation. In the context of NK cell-mediated cytotoxicity enhances conjugate formation with target cells. May also regulate the activity of the neurotrophin receptors NTRK1, NTRK2 and NTRK3. This is SH2 domain-containing protein 1A (Sh2d1a) from Rattus norvegicus (Rat).